Here is a 337-residue protein sequence, read N- to C-terminus: Diacylglycerol acyltransferase/mycolyltransferase Ag85A (337 aa).

An N-terminal signal peptide occupies residues 1-42 (MKLVDRFRGAATGTSRRLMVGAVGAALLSGLVGFVGGSATAS). Residue 85-86 (MR) participates in substrate binding. Residues 101-111 (FEWYYQSGISV) are fibronectin-binding. Cys-130 and Cys-135 form a disulfide bridge. Substrate contacts are provided by Ser-169 and Asp-197. Ser-169 (nucleophile) is an active-site residue. Glu-273 is a catalytic residue. Substrate is bound by residues 275 to 278 (FVRT), Lys-282, and 305 to 307 (HSW). His-305 is an active-site residue.

It belongs to the mycobacterial A85 antigen family. As to quaternary structure, homodimer.

It is found in the secreted. It localises to the cell wall. The protein resides in the cytoplasm. It carries out the reaction an acyl-CoA + a 1,2-diacyl-sn-glycerol = a triacyl-sn-glycerol + CoA. The enzyme catalyses 2 alpha,alpha'-trehalose 6-mycolate = alpha,alpha'-trehalose 6,6'-bismycolate + alpha,alpha-trehalose. The antigen 85 proteins (FbpA, FbpB, FbpC) are responsible for the high affinity of mycobacteria for fibronectin, a large adhesive glycoprotein, which facilitates the attachment of M.tuberculosis to murine alveolar macrophages (AMs). They also help to maintain the integrity of the cell wall by catalyzing the transfer of mycolic acids to cell wall arabinogalactan, and through the synthesis of alpha,alpha-trehalose dimycolate (TDM, cord factor). They catalyze the transfer of a mycoloyl residue from one molecule of alpha,alpha-trehalose monomycolate (TMM) to another TMM, leading to the formation of TDM. FbpA mediates triacylglycerol (TAG) formation with long-chain acyl-CoA as the acyl donor and 1,2-dipalmitoyl-sn-glycerol (1,2-dipalmitin) as the acyl acceptor. It has a preference for C26:0-CoA over C18:1-CoA. The polypeptide is Diacylglycerol acyltransferase/mycolyltransferase Ag85A (fbpA) (Mycobacterium ulcerans).